The primary structure comprises 281 residues: Polyamine aminopropyltransferase (281 aa).

One can recognise a PABS domain in the interval 2-236 (DLWLKEGQIS…GYWSFTIGSK (235 aa)). Gln31 lines the S-methyl-5'-thioadenosine pocket. Positions 62 and 86 each coordinate spermidine. Residues Glu106 and 138 to 139 (DG) contribute to the S-methyl-5'-thioadenosine site. The active-site Proton acceptor is the Asp156. Position 156 to 159 (156 to 159 (DSTD)) interacts with spermidine.

The protein belongs to the spermidine/spermine synthase family. Homodimer or homotetramer.

The protein localises to the cytoplasm. It catalyses the reaction S-adenosyl 3-(methylsulfanyl)propylamine + putrescine = S-methyl-5'-thioadenosine + spermidine + H(+). It participates in amine and polyamine biosynthesis; spermidine biosynthesis; spermidine from putrescine: step 1/1. In terms of biological role, catalyzes the irreversible transfer of a propylamine group from the amino donor S-adenosylmethioninamine (decarboxy-AdoMet) to putrescine (1,4-diaminobutane) to yield spermidine. The polypeptide is Polyamine aminopropyltransferase (Clostridium tetani (strain Massachusetts / E88)).